The chain runs to 228 residues: RNA chaperone ProQ (228 aa).

Residues 107 to 178 (KARVQAQRAE…REEKHTPVSD (72 aa)) are disordered. Basic and acidic residues-rich tracts occupy residues 117–136 (QQAKKREAAAAAGEKEDAPR) and 146–175 (RRKEGAERKPRADKPTTKAPRAPREEKHTP).

Belongs to the ProQ family.

It localises to the cytoplasm. In terms of biological role, RNA chaperone with significant RNA binding, RNA strand exchange and RNA duplexing activities. May regulate ProP activity through an RNA-based, post-transcriptional mechanism. The chain is RNA chaperone ProQ from Salmonella agona (strain SL483).